A 476-amino-acid chain; its full sequence is Cysteine--tRNA ligase (476 aa).

Cys27 is a Zn(2+) binding site. A 'HIGH' region motif is present at residues 29 to 39 (ITPYDSVHVGH). Residues Cys213, His238, and Glu242 each coordinate Zn(2+). The 'KMSKS' region signature appears at 271–275 (KMSKS). Lys274 lines the ATP pocket.

It belongs to the class-I aminoacyl-tRNA synthetase family. The cofactor is Zn(2+).

It is found in the cytoplasm. The enzyme catalyses tRNA(Cys) + L-cysteine + ATP = L-cysteinyl-tRNA(Cys) + AMP + diphosphate. The chain is Cysteine--tRNA ligase from Pyrobaculum arsenaticum (strain DSM 13514 / JCM 11321 / PZ6).